Reading from the N-terminus, the 476-residue chain is Transcription factor EB (476 aa).

Disordered stretches follow at residues M1–P66 and H107–S142. An interaction with ACSS2 region spans residues M1–L167. Over residues Q26–Q44 the composition is skewed to low complexity. S109, S114, S122, and S138 each carry phosphoserine. Residues S132–S142 are compositionally biased toward low complexity. Positions G136 to P153 match the Nuclear export signal motif. S142 carries the post-translational modification Phosphoserine; by MTOR. Residues E156–M165 are strong transcription activation domain. Position 183 is a phosphothreonine (T183). S211 carries the post-translational modification Phosphoserine; by MTOR. C212 is modified (S-(2,3-dicarboxypropyl)cysteine). In terms of domain architecture, bHLH spans Q235 to M288. Positions R245–R248 match the Nuclear localization signal motif. The tract at residues L298 to L319 is leucine-zipper. S332 is modified (phosphoserine). A disordered region spans residues E349–K430. Residues P369–P390 are compositionally biased toward pro residues. A phosphoserine mark is found at S423, S441, S466, S467, and S469. The span at S447–S469 shows a compositional bias: low complexity. Residues S447–L476 form a disordered region.

Belongs to the MiT/TFE family. As to quaternary structure, homodimer and heterodimer; with TFE3 or MITF. Interacts (when phosphorylated by MTOR) with YWHAZ; promoting retention in the cytosol. Interacts with IRGM; promoting association between TFEB and PPP3CB and dephosphorylation. Interacts with small GTPases Rag (RagA/RRAGA, RagB/RRAGB, RagC/RRAGC and/or RagD/RRAGD); promoting its recruitment to lysosomal membrane in the presence of nutrients. Interacts with ACSS2. Phosphorylation at Ser-211 by MTOR via non-canonical mTORC1 pathway regulates its subcellular location and activity. When nutrients are present, phosphorylation by MTOR promotes association with 14-3-3/YWHA adapters and retention in the cytosol. Inhibition of mTORC1, starvation and lysosomal disruption, promotes dephosphorylation by calcineurin PPP3CB and translocation to the nucleus. Dephosphorylated by calcineurin PPP3CB in response to lysosomal Ca(2+) release. IRGM promotes dephosphorylation by calcineurin PPP3CB, resulting in TFEB nuclear translocation and stimulation of lysosomal biogenesis. Dephosphorylated by phosphatase PPP3CA following Coxsackievirus B3 infection, leading to nuclear translocation. Exported from the nucleus in a mTORC1-dependent manner in response to nutrient availability. Post-translationally, alkylated via a non-enzymatic covalent modification. Itaconate, an anti-inflammatory metabolite generated in response to lipopolysaccharide, alkylates Cys-212, preventing association with 14-3-3/YWHA adapters, thereby promoting nuclear translocation and activity. In terms of processing, sumoylated; does not affect dimerization with MITF. (Microbial infection) Cleavage by Coxsackievirus B3 protease 3C after site Gln-60. This non-phosphorylated cleavage product retains its ability to interact with TFEB, TFE3 or MITF and presents impaired transcriptional activity, resulting in disruption of lysosomal functions and increased viral infection.

The protein localises to the nucleus. Its subcellular location is the cytoplasm. It localises to the cytosol. The protein resides in the lysosome membrane. With respect to regulation, inhibited by eltrombopag drug, which binds to the bHLH domain and disrupts DNA-binding. Transcription factor that acts as a master regulator of lysosomal biogenesis, autophagy, lysosomal exocytosis, lipid catabolism, energy metabolism and immune response. Specifically recognizes and binds E-box sequences (5'-CANNTG-3'); efficient DNA-binding requires dimerization with itself or with another MiT/TFE family member such as TFE3 or MITF. Involved in the cellular response to amino acid availability by acting downstream of MTOR: in the presence of nutrients, TFEB phosphorylation by MTOR promotes its cytosolic retention and subsequent inactivation. Upon starvation or lysosomal stress, inhibition of MTOR induces TFEB dephosphorylation, resulting in nuclear localization and transcription factor activity. Specifically recognizes and binds the CLEAR-box sequence (5'-GTCACGTGAC-3') present in the regulatory region of many lysosomal genes, leading to activate their expression, thereby playing a central role in expression of lysosomal genes. Regulates lysosomal positioning in response to nutrient deprivation by promoting the expression of PIP4P1. Acts as a positive regulator of autophagy by promoting expression of genes involved in autophagy. In association with TFE3, activates the expression of CD40L in T-cells, thereby playing a role in T-cell-dependent antibody responses in activated CD4(+) T-cells and thymus-dependent humoral immunity. Specifically recognizes the gamma-E3 box, a subset of E-boxes, present in the heavy-chain immunoglobulin enhancer. Plays a role in the signal transduction processes required for normal vascularization of the placenta. Involved in the immune response to infection by the bacteria S.aureus, S.typhimurium or S.enterica: infection promotes itaconate production, leading to alkylation, resulting in nuclear localization and transcription factor activity. Itaconate-mediated alkylation activates TFEB-dependent lysosomal biogenesis, facilitating the bacteria clearance during the antibacterial innate immune response. In association with ACSS2, promotes the expression of genes involved in lysosome biogenesis and both autophagy upon glucose deprivation. The chain is Transcription factor EB from Homo sapiens (Human).